Reading from the N-terminus, the 928-residue chain is Chitin synthase 2 (928 aa).

Disordered regions lie at residues 1–45 (MAYN…EAYA) and 110–179 (AYYT…SPAP). A compositionally biased stretch (polar residues) spans 17–28 (PSAQPQYDSRSP). Residues 130–140 (PSHDEPYRPDT) are compositionally biased toward basic and acidic residues. Helical transmembrane passes span 472–492 (SAFG…YVAL), 570–589 (WLNG…YQLW), 613–633 (LFAW…TASL), 644–664 (TVLG…CFIL), 678–698 (MMMV…SIFL), 723–743 (FFGL…ASFL), 753–773 (CFLQ…IYAF), 854–874 (VTAW…IAGF), and 893–913 (VILW…CWFL).

Belongs to the chitin synthase family. Class I subfamily.

It is found in the cell membrane. It carries out the reaction [(1-&gt;4)-N-acetyl-beta-D-glucosaminyl](n) + UDP-N-acetyl-alpha-D-glucosamine = [(1-&gt;4)-N-acetyl-beta-D-glucosaminyl](n+1) + UDP + H(+). Functionally, polymerizes chitin, a structural polymer of the cell wall and septum, by transferring the sugar moiety of UDP-GlcNAc to the non-reducing end of the growing chitin polymer. CHS2 plays a synergistic role to CHS1 in normal yeast cell reproductive growth, even if this role is less predominant than for CHS1. With CHS3, plays an important role in virulence. This Exophiala dermatitidis (Black yeast-like fungus) protein is Chitin synthase 2.